The sequence spans 435 residues: Serine--tRNA ligase (435 aa).

Position 238–240 (238–240) interacts with L-serine; sequence TAE. Residue 269 to 271 participates in ATP binding; it reads RAE. E292 is a binding site for L-serine. ATP is bound at residue 356-359; that stretch reads EISS. S392 contributes to the L-serine binding site.

Belongs to the class-II aminoacyl-tRNA synthetase family. Type-1 seryl-tRNA synthetase subfamily. In terms of assembly, homodimer. The tRNA molecule binds across the dimer.

It localises to the cytoplasm. The catalysed reaction is tRNA(Ser) + L-serine + ATP = L-seryl-tRNA(Ser) + AMP + diphosphate + H(+). It carries out the reaction tRNA(Sec) + L-serine + ATP = L-seryl-tRNA(Sec) + AMP + diphosphate + H(+). Its pathway is aminoacyl-tRNA biosynthesis; selenocysteinyl-tRNA(Sec) biosynthesis; L-seryl-tRNA(Sec) from L-serine and tRNA(Sec): step 1/1. In terms of biological role, catalyzes the attachment of serine to tRNA(Ser). Is also able to aminoacylate tRNA(Sec) with serine, to form the misacylated tRNA L-seryl-tRNA(Sec), which will be further converted into selenocysteinyl-tRNA(Sec). The polypeptide is Serine--tRNA ligase (Methylobacterium sp. (strain 4-46)).